The sequence spans 280 residues: Undecaprenyl-diphosphatase (280 aa).

Transmembrane regions (helical) follow at residues 2 to 22 (FIIEIFISIIYGIIEGITEWL), 45 to 65 (AFMEMFNVVIQLGAILAVVVI), 86 to 106 (WQLWAKVVVAALPAAVIGLFL), 114 to 134 (FYNLVSVSVMLIVYGAAFIYL), 147 to 167 (LASLPYKTALQIGLFQILALF), 188 to 208 (SVVTEFTFYLGIPIMFGASGW), 223 to 243 (GQIFLLLVAMGVAFGVSLVVI), and 255 to 275 (FTIFGKYRIGLGGVLLVYAAI).

The protein belongs to the UppP family.

It is found in the cell membrane. It catalyses the reaction di-trans,octa-cis-undecaprenyl diphosphate + H2O = di-trans,octa-cis-undecaprenyl phosphate + phosphate + H(+). Its function is as follows. Catalyzes the dephosphorylation of undecaprenyl diphosphate (UPP). Confers resistance to bacitracin. The sequence is that of Undecaprenyl-diphosphatase from Streptococcus sanguinis (strain SK36).